Consider the following 349-residue polypeptide: Flap endonuclease 1 (349 aa).

Residues 1 to 98 (MDLADLVKDV…EELERRRKAK (98 aa)) are N-domain. Mg(2+) contacts are provided by Asp-27, Asp-80, Glu-152, Glu-154, Asp-173, Asp-175, and Asp-236. The I-domain stretch occupies residues 116–258 (ELRKYSQAIL…RALKIIKKYG (143 aa)). Residues 341-349 (RQTGLDRWF) form an interaction with PCNA region.

This sequence belongs to the XPG/RAD2 endonuclease family. FEN1 subfamily. As to quaternary structure, interacts with PCNA via subunit PCNA1. Mg(2+) serves as cofactor.

Heterotrimeric PCNA stimulates the nuclease activity without altering cleavage specificity. In terms of biological role, structure-specific nuclease with 5'-flap endonuclease and 5'-3' exonuclease activities involved in DNA replication and repair. During DNA replication, cleaves the 5'-overhanging flap structure that is generated by displacement synthesis when DNA polymerase encounters the 5'-end of a downstream Okazaki fragment. Binds the unpaired 3'-DNA end and kinks the DNA to facilitate 5' cleavage specificity. Cleaves one nucleotide into the double-stranded DNA from the junction in flap DNA, leaving a nick for ligation. Also involved in the base excision repair (BER) pathway. Acts as a genome stabilization factor that prevents flaps from equilibrating into structures that lead to duplications and deletions. Also possesses 5'-3' exonuclease activity on nicked or gapped double-stranded DNA. DNA polymerase I, DNA ligase and the flap endonuclease may be constitutively associated with the PCNA heterotrimer forming a scanning complex able to couple DNA synthesis and Okazaki fragment maturation. The polypeptide is Flap endonuclease 1 (Saccharolobus solfataricus (strain ATCC 35092 / DSM 1617 / JCM 11322 / P2) (Sulfolobus solfataricus)).